Here is a 293-residue protein sequence, read N- to C-terminus: Microtubule-associated protein RP/EB family member 1B (293 aa).

Residues 13–115 enclose the Calponin-homology (CH) domain; sequence FVGRNEILSW…FLQWLKRFCD (103 aa). Disordered stretches follow at residues 124-188 and 262-293; these read ENYN…SAEV and LGLEGYEEEGKEEEEEEEEEEEEAAAAAETQT. A compositionally biased stretch (basic and acidic residues) spans 129–141; it reads VERRSRGGREKSV. A compositionally biased stretch (polar residues) spans 151 to 166; the sequence is LQTNNMHHPPVATSNK. One can recognise an EB1 C-terminal domain in the interval 180-250; the sequence is GGSNSSAEVQ…LYATDANESV (71 aa). Residues 266-285 show a composition bias toward acidic residues; sequence GYEEEGKEEEEEEEEEEEEA.

It belongs to the MAPRE family. Homodimer and heterodimer with EB1A. In terms of tissue distribution, highly expressed in guard cells of leaf stomata, pollen grains and pollen tubes. Expressed in young roots.

It is found in the cytoplasm. The protein resides in the cytoskeleton. It localises to the spindle pole. The protein localises to the phragmoplast. Functionally, binds to the plus end of microtubules and regulates the dynamics of the microtubule cytoskeleton. May be involved in anchoring microtubules to their nucleation sites and/or functioning as a reservoir for distribution to the growing end. In plants, microtubule minus ends are not necessarily severed from the nucleation site and transported to the plus end of a microtubule as part of the recycling process. May play a role in endomembrane organization during polarized growth of plant cells. This Arabidopsis thaliana (Mouse-ear cress) protein is Microtubule-associated protein RP/EB family member 1B (EB1B).